A 347-amino-acid chain; its full sequence is GMP reductase (347 aa).

NADP(+) is bound at residue 108 to 131 (ADFEKTVQILALNPALNFVCIDVA). K(+) is bound by residues Gly-181 and Gly-183. The active-site Thioimidate intermediate is Cys-186. 216–239 (IVSDGGCTMPGDVAKAFGGGADFV) is an NADP(+) binding site.

It belongs to the IMPDH/GMPR family. GuaC type 1 subfamily. In terms of assembly, homotetramer.

The catalysed reaction is IMP + NH4(+) + NADP(+) = GMP + NADPH + 2 H(+). Catalyzes the irreversible NADPH-dependent deamination of GMP to IMP. It functions in the conversion of nucleobase, nucleoside and nucleotide derivatives of G to A nucleotides, and in maintaining the intracellular balance of A and G nucleotides. This is GMP reductase from Salmonella typhi.